A 560-amino-acid polypeptide reads, in one-letter code: Protein yellow (560 aa).

The first 30 residues, 1 to 30 (MHVQDKGGIGALTALSLLLVAVTMVTPTQA), serve as a signal peptide directing secretion. N-linked (GlcNAc...) asparagine glycosylation is found at N153 and N224. A disordered region spans residues 452-492 (QYRPVLPQKPQTSWGPSPPSRSYLPSLGASPGGPGQVVSSV). Low complexity predominate over residues 471-480 (SRSYLPSLGA).

The protein belongs to the major royal jelly protein family.

Its subcellular location is the secreted. Controls the pigmentation pattern of the adult cuticle and larval mouth parts. In Drosophila pseudoobscura pseudoobscura (Fruit fly), this protein is Protein yellow (y).